We begin with the raw amino-acid sequence, 336 residues long: Probable deoxyhypusine synthase (336 aa).

Lys308 acts as the Nucleophile in catalysis.

It belongs to the deoxyhypusine synthase family. Requires NAD(+) as cofactor.

It catalyses the reaction [eIF5A protein]-L-lysine + spermidine = [eIF5A protein]-deoxyhypusine + propane-1,3-diamine. It functions in the pathway protein modification; eIF5A hypusination. Functionally, catalyzes the NAD-dependent oxidative cleavage of spermidine and the subsequent transfer of the butylamine moiety of spermidine to the epsilon-amino group of a specific lysine residue of the eIF-5A precursor protein to form the intermediate deoxyhypusine residue. The polypeptide is Probable deoxyhypusine synthase (Thermococcus gammatolerans (strain DSM 15229 / JCM 11827 / EJ3)).